Here is a 441-residue protein sequence, read N- to C-terminus: Chromosome partition protein MukF (441 aa).

Residues 208–236 are leucine-zipper; that stretch reads LTETSSTLRELQDTLEAAGDKLQTSLLSI.

This sequence belongs to the MukF family. As to quaternary structure, interacts, and probably forms a ternary complex, with MukE and MukB via its C-terminal region. The complex formation is stimulated by calcium or magnesium. It is required for an interaction between MukE and MukB.

The protein resides in the cytoplasm. Its subcellular location is the nucleoid. Its function is as follows. Involved in chromosome condensation, segregation and cell cycle progression. May participate in facilitating chromosome segregation by condensation DNA from both sides of a centrally located replisome during cell division. Not required for mini-F plasmid partitioning. Probably acts via its interaction with MukB and MukE. Overexpression results in anucleate cells. It has a calcium binding activity. The polypeptide is Chromosome partition protein MukF (Pectobacterium atrosepticum (strain SCRI 1043 / ATCC BAA-672) (Erwinia carotovora subsp. atroseptica)).